A 370-amino-acid polypeptide reads, in one-letter code: NADH-quinone oxidoreductase subunit D 2 (370 aa).

The protein belongs to the complex I 49 kDa subunit family. NDH-1 is composed of 14 different subunits. Subunits NuoB, C, D, E, F, and G constitute the peripheral sector of the complex.

It is found in the cell inner membrane. It catalyses the reaction a quinone + NADH + 5 H(+)(in) = a quinol + NAD(+) + 4 H(+)(out). Functionally, NDH-1 shuttles electrons from NADH, via FMN and iron-sulfur (Fe-S) centers, to quinones in the respiratory chain. The immediate electron acceptor for the enzyme in this species is believed to be ubiquinone. Couples the redox reaction to proton translocation (for every two electrons transferred, four hydrogen ions are translocated across the cytoplasmic membrane), and thus conserves the redox energy in a proton gradient. In Solibacter usitatus (strain Ellin6076), this protein is NADH-quinone oxidoreductase subunit D 2.